A 25-amino-acid polypeptide reads, in one-letter code: Omega-conotoxin MVIIB (25 aa).

3 disulfide bridges follow: Cys1–Cys16, Cys8–Cys20, and Cys15–Cys25. Residue Cys25 is modified to Cysteine amide.

It belongs to the conotoxin O1 superfamily. As to expression, expressed by the venom duct.

It localises to the secreted. Omega-conotoxins act at presynaptic membranes, they bind and block voltage-gated calcium channels (Cav). The chain is Omega-conotoxin MVIIB from Conus magus (Magical cone).